The chain runs to 463 residues: Mitochondrial dynamics protein MID51 (463 aa).

Over 1 to 23 (MAGAGERKGKKDDNGIGTAIDFV) the chain is Mitochondrial intermembrane. A helical transmembrane segment spans residues 24–46 (LSNARLVLGVGGAAMLGIATLAV). Over 47–463 (KRMYDRAISA…LSEPEVLLQT (417 aa)) the chain is Cytoplasmic. Positions 49 to 195 (MYDRAISAPT…LSGSLYDDLQ (147 aa)) are dimerization. Residues Ser55, Ser59, Ser79, and Ser94 each carry the phosphoserine modification. The disordered stretch occupies residues 57–79 (PTSPTRLSHSGKRSWEEPNWMGS). The segment at 104-123 (AFDTDTFCPPRPKPVARKGQ) is disordered. The tract at residues 160–169 (AAVDICAELR) is important for interaction with DNM1L. Positions 187, 189, and 201 each coordinate ADP. The important for interaction with DNM1L stretch occupies residues 234–243 (RRENPEYFPR). ADP contacts are provided by Ser340, Arg342, and Lys368.

Belongs to the MID49/MID51 family. In terms of assembly, homodimer. Interacts with DNM1L.

Its subcellular location is the mitochondrion outer membrane. Functionally, mitochondrial outer membrane protein which regulates mitochondrial fission/fusion dynamics. Promotes the recruitment and association of the fission mediator dynamin-related protein 1 (DNM1L) to the mitochondrial surface independently of the mitochondrial fission FIS1 and MFF proteins. Regulates DNM1L GTPase activity and DNM1L oligomerization. Binds ADP and can also bind GDP, although with lower affinity. Does not bind CDP, UDP, ATP, AMP or GTP. Inhibits DNM1L GTPase activity in the absence of bound ADP. Requires ADP to stimulate DNM1L GTPase activity and the assembly of DNM1L into long, oligomeric tubules with a spiral pattern, as opposed to the ring-like DNM1L oligomers observed in the absence of bound ADP. Does not require ADP for its function in recruiting DNM1L. This chain is Mitochondrial dynamics protein MID51 (MIEF1), found in Pongo abelii (Sumatran orangutan).